The following is a 2449-amino-acid chain: Nonribisomal peptide synthetase phqB (2449 aa).

Residues 253 to 654 (IQVHSGPGRL…GRRDTVVKIR (402 aa)) form an adenylation 1 region. The Carrier 1 domain occupies 795 to 870 (LPMTPNEDVL…LRTVAKEARP (76 aa)). Ser815 carries the O-(pantetheine 4'-phosphoryl)serine modification. Positions 913–1337 (QDIYPTTPLQ…LISDRDSELL (425 aa)) are condensation 1. Positions 1357–1756 (EAQVTRNPSK…TFTFLGRTNQ (400 aa)) are adenylation 2. In terms of domain architecture, Carrier 2 spans 1915-1993 (WALSKHIGQL…MVAEMIDRTP (79 aa)). Position 1952 is an O-(pantetheine 4'-phosphoryl)serine (Ser1952). The tract at residues 2041 to 2297 (LTGATGFLGT…VAAVDWVASL (257 aa)) is reductase (R) domain. Residues Thr2045, Met2249, and Asn2259 each contribute to the NADPH site.

The protein belongs to the NRP synthetase family.

The protein operates within alkaloid biosynthesis. Functionally, nonribisomal peptide synthetase; part of the gene cluster that mediates the biosynthesis of paraherquamide, a fungal indole alkaloid that belongs to a family of natural products containing a characteristic bicyclo[2.2.2]diazaoctane core. The first steps in the biosynthesis of paraherquamide is the production of the beta-methyl-proline precursor from L-isoleucine. They require oxidation of a terminally hydroxylated L-isoleucine to the corresponding aldehyde by enzymes which have still to be identified. Spontaneous cyclization and dehydration would yield the 4-methyl pyrolline-5-carboxylic acid, which is then reduced by the pyrroline-5-carboxylate reductase phqD leading to the beta-methyl-proline precursor. The next step of paraherquamide biosynthesis involves coupling of beta-methyl-proline and L-tryptophan by the bimodular NRPS phqB, to produce a monooxopiperazine intermediate. The reductase (R) domain of phqB utilizes NADPH for hydride transfer to reduce the thioester bond of the T domain-tethered linear dipeptide to a hemithioaminal intermediate, which spontaneously cleaves the C-S bond to release the aldehyde product. This compound undergoes spontaneous cyclization and dehydration to give a dienamine which is reverse prenylated at C-2 by the reverse prenyltransferase phqJ. The other prenyltransferase present in the cluster, phqI may be a redundant gene in the pathway. During biosynthetic assembly, the key step to produce the polycyclic core is catalyzed by the bifunctional reductase and intramolecular [4+2] Diels-Alderase, phqE, resulting in formation of the [2.2.2] diazaoctane intermediate preparaherquamide. Following formation of preparaherquamide, an indole 2,3-epoxidation-initiated pinacol-like rearrangement is catalyzed by the phqK FAD-dependent monooxygenase. The prenyltransferase phqA, the cytochrome P450 monooxygenase phqL, and the FAD-linked oxidoreductase phqH (or the cytochrome P450 monooxygenase phqM), are proposed to be involved in the formation of the pyran ring. The FAD-dependent monooxygenase phqK is likely responsible for generation of the spiro-oxindole, and the N-methylation is likely mediated by the phqN methyltransferase leading to the isolable natural product paraherquamide F. However, the order of these biosynthetic steps has still to be determined. In late-stage paraherquamide biosynthesis, the third P450 monooxygenase, phqO, is probably responsible for the C-14 hydroxylation, transforming paraherquamide F to paraherquamide G, and paraherquamide E to the final product paraherquamide A. The expansion from the 6-membered ring pyran (in paraherquamides F and G) to the 7-membered dioxepin ring (in paraherquamides A and E) represents a poorly understood but intriguing process that probably involves the 2-oxoglutarate-dependent dioxygenase phqC. Finally, the remaining members of the paraherquamide cluster, including phqI as well as phqM (or phqH), do not have a clearly prescribed role and appear to be redundant. The protein is Nonribisomal peptide synthetase phqB of Penicillium fellutanum.